A 119-amino-acid chain; its full sequence is Large ribosomal subunit protein uL22 (119 aa).

The protein belongs to the universal ribosomal protein uL22 family. As to quaternary structure, part of the 50S ribosomal subunit.

In terms of biological role, this protein binds specifically to 23S rRNA; its binding is stimulated by other ribosomal proteins, e.g. L4, L17, and L20. It is important during the early stages of 50S assembly. It makes multiple contacts with different domains of the 23S rRNA in the assembled 50S subunit and ribosome. Functionally, the globular domain of the protein is located near the polypeptide exit tunnel on the outside of the subunit, while an extended beta-hairpin is found that lines the wall of the exit tunnel in the center of the 70S ribosome. The sequence is that of Large ribosomal subunit protein uL22 from Chlorobium chlorochromatii (strain CaD3).